A 188-amino-acid polypeptide reads, in one-letter code: UPF0200 protein M1627_1244 (188 aa).

An ATP-binding site is contributed by 15–22; that stretch reads GMPGSGKS.

Belongs to the UPF0200 family.

In Saccharolobus islandicus (strain M.16.27) (Sulfolobus islandicus), this protein is UPF0200 protein M1627_1244.